We begin with the raw amino-acid sequence, 228 residues long: Biopolymer transport protein exbB1 (228 aa).

Helical transmembrane passes span 11-31 (LGLM…LLAE), 116-136 (LTLI…LGLI), and 158-178 (LGVA…AVAG).

The protein belongs to the ExbB/TolQ family. As to quaternary structure, the accessory proteins ExbB and ExbD seem to form a complex with TonB.

The protein localises to the cell inner membrane. Functionally, involved in the TonB-dependent energy-dependent transport of various receptor-bound substrates. Protects ExbD from proteolytic degradation and functionally stabilizes TonB. The chain is Biopolymer transport protein exbB1 (exbB1) from Vibrio cholerae serotype O1 (strain ATCC 39315 / El Tor Inaba N16961).